We begin with the raw amino-acid sequence, 428 residues long: Ammonium transporter AmtB (428 aa).

The first 22 residues, 1 to 22 (MKIATIKTGLASLAMLPGLVMA), serve as a signal peptide directing secretion. Topologically, residues 23 to 32 (APAVADKADN) are periplasmic. A helical membrane pass occupies residues 33 to 54 (AFMMICTALVLFMTIPGIALFY). Topologically, residues 55 to 65 (GGLIRGKNVLS) are cytoplasmic. The chain crosses the membrane as a helical span at residues 66–90 (MLTQVTVTFALVCILWVVYGYSLAF). Residues 91 to 119 (GEGNNFFGNINWLMLKNIELTAVMGSIYQ) lie on the Periplasmic side of the membrane. The helical transmembrane segment at 120 to 142 (YIHVAFQGSFACITVGLIVGALA) threads the bilayer. Topologically, residues 143-146 (ERIR) are cytoplasmic. The chain crosses the membrane as a helical span at residues 147 to 171 (FSAVLIFVVVWLTLSYIPIAHMVWG). Residues 172–185 (GGLLASHGALDFAG) are Periplasmic-facing. The chain crosses the membrane as a helical span at residues 186 to 201 (GTVVHINAAIAGLVGA). The Cytoplasmic portion of the chain corresponds to 202–221 (YLIGKRVGFGKEAFKPHNLP). Residues 222 to 241 (MVFTGTAILYIGWFGFNAGS) traverse the membrane as a helical segment. S241 is an NH4(+) binding site. At 242-248 (AGTANEI) the chain is on the periplasmic side. Residues 249-273 (AALAFVNTVVATAAAILGWIFGEWA) form a helical membrane-spanning segment. Residues 274 to 279 (LRGKPS) lie on the Cytoplasmic side of the membrane. Residues 280–300 (LLGACSGAIAGLVGVTPACGY) form a helical membrane-spanning segment. Residues 301 to 302 (IG) are Periplasmic-facing. Residues 303-321 (VGGALIIGVVAGLAGLWGV) form a helical membrane-spanning segment. The Cytoplasmic segment spans residues 322–333 (TMLKRLLRVDDP). The helical transmembrane segment at 334–355 (CDVFGVHGVCGIVGCIMTGIFA) threads the bilayer. Residues 356-370 (ASSLGGVGFAEGVTM) are Periplasmic-facing. A helical transmembrane segment spans residues 371-399 (GHQLLVQLESIAITIVWSGVVAFIGYKLA). At 400–428 (DLTVGLRVPEEQEREGLDVNSHGENAYNA) the chain is on the cytoplasmic side.

This sequence belongs to the ammonia transporter channel (TC 1.A.11.2) family. As to quaternary structure, homotrimer. In response to elevation of the extracellular ammonium concentration, interacts and forms a complex with GlnK.

The protein localises to the cell inner membrane. In the presence of high extracellular ammonium concentrations, transport activity is inhibited by interaction with the regulatory protein GlnK. Formation of the GlnK-AmtB complex is influenced by intracellular pools of the effector molecules ATP, ADP, Mg(2+) and 2-oxoglutarate. The GlnK-AmtB interaction is also controlled by the level of intracellular glutamine and the uridylylation status of GlnK. Involved in the uptake of ammonium/ammonia (NH(4)(+)/NH(3)). Transport is electrogenic. Following sequestration of NH(4)(+) at the periplasmic face, NH(4)(+) is deprotonated and neutral NH(3) is transported into the cytoplasm. Neutral NH(3) and charged H(+) are carried separately across the membrane on a unique two-lane pathway, before recombining to NH(4)(+) inside the cell. This chain is Ammonium transporter AmtB (amtB), found in Escherichia coli O157:H7.